Consider the following 346-residue polypeptide: UPF0283 membrane protein VP1870 (346 aa).

A disordered region spans residues 1–30 (MSELKQKQIFSEKALEKEQQSDSPELTAQK). Polar residues predominate over residues 21–30 (SDSPELTAQK). The next 2 membrane-spanning stretches (helical) occupy residues 73–93 (VFAT…VTAV) and 98–118 (WLAL…LGAI).

This sequence belongs to the UPF0283 family.

Its subcellular location is the cell inner membrane. The polypeptide is UPF0283 membrane protein VP1870 (Vibrio parahaemolyticus serotype O3:K6 (strain RIMD 2210633)).